The primary structure comprises 263 residues: Hatching enzyme 1.2 (263 aa).

An N-terminal signal peptide occupies residues 1 to 19 (MDIRASLSILLLLFGLSQA). Residues 20–64 (SPLREFEAIFVSEPETVDITTQILETNKGSSEVLFEGDVVLPKNR) constitute a propeptide, activation peptide. The 199-residue stretch at 65 to 263 (NALICEDKSC…ILRINKLYGC (199 aa)) folds into the Peptidase M12A domain. Disulfide bonds link Cys69/Cys74, Cys114/Cys263, and Cys135/Cys155. His163 contacts Zn(2+). Residue Glu164 is part of the active site. 2 residues coordinate Zn(2+): His167 and His173.

Requires Zn(2+) as cofactor. Expressed in cells of the hatching gland.

The protein resides in the secreted. It catalyses the reaction Hydrolysis of the inner layer of fish egg envelope. Also hydrolysis of casein and small molecule substrates such as succinyl-Leu-Leu-Val-Tyr-|-7-(4-methyl)coumarylamide.. In terms of biological role, metalloendopeptidase which participates in the breakdown of the egg envelope at the time of hatching. Cleaves the N-terminal regions of the zona pellucia glycoproteins ZP2 and ZP3, where it specifically recognizes the peptide sequences TVQQS-|-DYLIK (major site) and KLMLK-|-APEPF (minor site). The chain is Hatching enzyme 1.2 from Danio rerio (Zebrafish).